Here is a 524-residue protein sequence, read N- to C-terminus: Nuclear distribution protein PAC1 (524 aa).

The stretch at 65–90 (STVLRLQRKIIDLENEVGTLRSIVDG) forms a coiled coil. 8 WD repeats span residues 121-160 (QQNQ…TSIP), 166-217 (AHTR…HIRT), 220-262 (GHDH…KSFT), 277-317 (NSQL…GLAL), 353-394 (IPQE…LIPH), 415-454 (GHQS…VTGS), 463-492 (GHDG…DATE), and 493-524 (EESH…KLWS).

It belongs to the WD repeat LIS1/nudF family. In terms of assembly, self-associates. Interacts with NDL1 and dynein.

The protein localises to the cytoplasm. It is found in the cytoskeleton. Its subcellular location is the spindle pole. Positively regulates the activity of the minus-end directed microtubule motor protein dynein. Plays a central role in positioning the mitotic spindle at the bud neck during cell division. Targets cytoplasmic dynein to microtubule plus ends, thereby promoting dynein-mediated microtubule sliding along the bud cortex and consequently the movement of the mitotic spindle to the bud neck. The sequence is that of Nuclear distribution protein PAC1 from Scheffersomyces stipitis (strain ATCC 58785 / CBS 6054 / NBRC 10063 / NRRL Y-11545) (Yeast).